The sequence spans 407 residues: P2X receptor D (407 aa).

Residues 1–22 (MDWDNIFSYNTAKIVTIKDRRL) are Cytoplasmic-facing. The helical transmembrane segment at 23–43 (GGLHIIFMVLIIVYIVIYSTI) threads the bilayer. Over 44-300 (YKKGYLLTET…IQNGEIGSFN (257 aa)) the chain is Lumenal. The pore-forming motif stretch occupies residues 283-296 (RHGIRLIFIQNGEI). Residues 301-321 (FQALLLTFVSGLGLLAISTVL) traverse the membrane as a helical segment. Residues 322-407 (VDQLAIRFLP…QNIQNNNIIL (86 aa)) lie on the Cytoplasmic side of the membrane. The disordered stretch occupies residues 371–394 (KNNENNNNNDDYNDDDNEIFDDNN). Residues 381-391 (DYNDDDNEIFD) are compositionally biased toward acidic residues.

It belongs to the P2X receptor family.

Its subcellular location is the contractile vacuole membrane. Functionally, P2X receptors are ligand-gated ion channels that play a role in intracellular calcium signaling. ATP does not evoke inward currents in p2xD. Not essential for osmoregulation. The polypeptide is P2X receptor D (p2xD) (Dictyostelium discoideum (Social amoeba)).